Here is a 414-residue protein sequence, read N- to C-terminus: Dual-specificity RNA methyltransferase RlmN (414 aa).

The span at methionine 1–aspartate 13 shows a compositional bias: polar residues. Positions methionine 1–glutamine 22 are disordered. Glutamate 124 (proton acceptor) is an active-site residue. The Radical SAM core domain occupies threonine 134–aspartate 377. The cysteines at positions 141 and 382 are disulfide-linked. The [4Fe-4S] cluster site is built by cysteine 148, cysteine 152, and cysteine 155. Residues glycine 204 to glutamate 205, serine 236, serine 258 to histidine 260, and asparagine 339 each bind S-adenosyl-L-methionine. Cysteine 382 functions as the S-methylcysteine intermediate in the catalytic mechanism.

Belongs to the radical SAM superfamily. RlmN family. [4Fe-4S] cluster is required as a cofactor.

It localises to the cytoplasm. It carries out the reaction adenosine(2503) in 23S rRNA + 2 reduced [2Fe-2S]-[ferredoxin] + 2 S-adenosyl-L-methionine = 2-methyladenosine(2503) in 23S rRNA + 5'-deoxyadenosine + L-methionine + 2 oxidized [2Fe-2S]-[ferredoxin] + S-adenosyl-L-homocysteine. The enzyme catalyses adenosine(37) in tRNA + 2 reduced [2Fe-2S]-[ferredoxin] + 2 S-adenosyl-L-methionine = 2-methyladenosine(37) in tRNA + 5'-deoxyadenosine + L-methionine + 2 oxidized [2Fe-2S]-[ferredoxin] + S-adenosyl-L-homocysteine. Functionally, specifically methylates position 2 of adenine 2503 in 23S rRNA and position 2 of adenine 37 in tRNAs. m2A2503 modification seems to play a crucial role in the proofreading step occurring at the peptidyl transferase center and thus would serve to optimize ribosomal fidelity. This chain is Dual-specificity RNA methyltransferase RlmN, found in Acinetobacter baylyi (strain ATCC 33305 / BD413 / ADP1).